The chain runs to 205 residues: Suppressor of IKBKE 1 (205 aa).

2 coiled-coil regions span residues 4–32 and 154–192; these read TIDK…LIDQ and KAIQ…ESLR.

It belongs to the SIKE family. Interacts with IKBKE and TBK1 via its coiled coil region. Interaction with TBK1 is disrupted upon viral infection or TLR3 stimulation. Interacts with CDC42BPB. Associates with the STRIPAK core complex composed of PP2A catalytic and scaffolding subunits, the striatins (PP2A regulatory subunits), the striatin-associated proteins MOB4, STRIP1 and STRIP2, PDCD10 and members of the STE20 kinases, such as STK24 and STK26.

It is found in the cytoplasm. Functionally, suppressor of IKK-epsilon. Associates with the striatin-interacting phosphatase and kinase (STRIPAK) core complex, forming the extended (SIKE1:SLMAP)STRIPAK complex. The (SIKE1:SLMAP)STRIPAK complex dephosphorylates STK3 leading to the inhibition of Hippo signaling and the control of cell growth. The protein is Suppressor of IKBKE 1 (sike1) of Xenopus laevis (African clawed frog).